The chain runs to 46 residues: Acetylajmalan esterase (46 aa).

N-linked (GlcNAc...) asparagine glycosylation occurs at asparagine 39.

Belongs to the 'GDSL' lipolytic enzyme family.

It catalyses the reaction 17-O-acetylajmaline + H2O = ajmaline + acetate + H(+). It carries out the reaction 17-O-acetylnorajmaline + H2O = norajmaline + acetate + H(+). Functionally, deacetylates 17-O-acetylajmaline and 17-O-acetylnorajmaline, but is inactive toward other acetylated alkaloids. This is Acetylajmalan esterase from Rauvolfia verticillata (Common devil-pepper).